The primary structure comprises 296 residues: Lipoyl synthase (296 aa).

The [4Fe-4S] cluster site is built by Cys38, Cys43, Cys49, Cys64, Cys68, Cys71, and Ser279. In terms of domain architecture, Radical SAM core spans 50–268; the sequence is WDGGCLTFMV…AEYGRSLGFK (219 aa).

Belongs to the radical SAM superfamily. Lipoyl synthase family. Requires [4Fe-4S] cluster as cofactor.

The protein localises to the cytoplasm. It carries out the reaction [[Fe-S] cluster scaffold protein carrying a second [4Fe-4S](2+) cluster] + N(6)-octanoyl-L-lysyl-[protein] + 2 oxidized [2Fe-2S]-[ferredoxin] + 2 S-adenosyl-L-methionine + 4 H(+) = [[Fe-S] cluster scaffold protein] + N(6)-[(R)-dihydrolipoyl]-L-lysyl-[protein] + 4 Fe(3+) + 2 hydrogen sulfide + 2 5'-deoxyadenosine + 2 L-methionine + 2 reduced [2Fe-2S]-[ferredoxin]. The protein operates within protein modification; protein lipoylation via endogenous pathway; protein N(6)-(lipoyl)lysine from octanoyl-[acyl-carrier-protein]: step 2/2. Its function is as follows. Catalyzes the radical-mediated insertion of two sulfur atoms into the C-6 and C-8 positions of the octanoyl moiety bound to the lipoyl domains of lipoate-dependent enzymes, thereby converting the octanoylated domains into lipoylated derivatives. The chain is Lipoyl synthase from Methanocella arvoryzae (strain DSM 22066 / NBRC 105507 / MRE50).